The sequence spans 273 residues: Dermonecrotic toxin LarSicTox-alphaIB1b (273 aa).

The active site involves His5. The Mg(2+) site is built by Glu25 and Asp27. His41 acts as the Nucleophile in catalysis. Cystine bridges form between Cys45–Cys51 and Cys47–Cys190. Residue Asp85 participates in Mg(2+) binding. Residue Asn250 is glycosylated (N-linked (GlcNAc...) asparagine).

Belongs to the arthropod phospholipase D family. Class II subfamily. Mg(2+) serves as cofactor. As to expression, expressed by the venom gland.

The protein resides in the secreted. It carries out the reaction an N-(acyl)-sphingosylphosphocholine = an N-(acyl)-sphingosyl-1,3-cyclic phosphate + choline. The catalysed reaction is an N-(acyl)-sphingosylphosphoethanolamine = an N-(acyl)-sphingosyl-1,3-cyclic phosphate + ethanolamine. The enzyme catalyses a 1-acyl-sn-glycero-3-phosphocholine = a 1-acyl-sn-glycero-2,3-cyclic phosphate + choline. It catalyses the reaction a 1-acyl-sn-glycero-3-phosphoethanolamine = a 1-acyl-sn-glycero-2,3-cyclic phosphate + ethanolamine. In terms of biological role, dermonecrotic toxins cleave the phosphodiester linkage between the phosphate and headgroup of certain phospholipids (sphingolipid and lysolipid substrates), forming an alcohol (often choline) and a cyclic phosphate. This toxin acts on sphingomyelin (SM). It may also act on ceramide phosphoethanolamine (CPE), lysophosphatidylcholine (LPC) and lysophosphatidylethanolamine (LPE), but not on lysophosphatidylserine (LPS), and lysophosphatidylglycerol (LPG). It acts by transphosphatidylation, releasing exclusively cyclic phosphate products as second products. Induces dermonecrosis, hemolysis, increased vascular permeability, edema, inflammatory response, and platelet aggregation. The protein is Dermonecrotic toxin LarSicTox-alphaIB1b of Loxosceles arizonica (Arizona brown spider).